The sequence spans 416 residues: Chorismate synthase (416 aa).

Positions 40 and 46 each coordinate NADP(+). FMN-binding positions include 135–137 (RAS), 256–257 (QA), G300, 315–319 (KPIAT), and R341.

This sequence belongs to the chorismate synthase family. Homotetramer. FMNH2 serves as cofactor.

It carries out the reaction 5-O-(1-carboxyvinyl)-3-phosphoshikimate = chorismate + phosphate. It participates in metabolic intermediate biosynthesis; chorismate biosynthesis; chorismate from D-erythrose 4-phosphate and phosphoenolpyruvate: step 7/7. In terms of biological role, catalyzes the anti-1,4-elimination of the C-3 phosphate and the C-6 proR hydrogen from 5-enolpyruvylshikimate-3-phosphate (EPSP) to yield chorismate, which is the branch point compound that serves as the starting substrate for the three terminal pathways of aromatic amino acid biosynthesis. This reaction introduces a second double bond into the aromatic ring system. This Kocuria rhizophila (strain ATCC 9341 / DSM 348 / NBRC 103217 / DC2201) protein is Chorismate synthase.